A 134-amino-acid chain; its full sequence is Alkaline proteinase inhibitor (134 aa).

An N-terminal signal peptide occupies residues 1 to 26; sequence MVFAAWYLKFAFFVALAFSIIGGSMA. Cysteines 50 and 73 form a disulfide.

This sequence belongs to the protease inhibitor I38 family.

It localises to the periplasm. Functionally, inhibitor of the alkaline protease. This Photorhabdus luminescens (Xenorhabdus luminescens) protein is Alkaline proteinase inhibitor (inh).